Reading from the N-terminus, the 404-residue chain is Glycerol-1-phosphate dehydrogenase [NAD(P)+] (404 aa).

NAD(+) contacts are provided by residues Asp55, 117–121, and 139–142; these read GTVHD and TAPS. Substrate is bound at residue Asp144. Ser148 is a binding site for NAD(+). Residue Asp191 coordinates substrate. The Ni(2+) site is built by Asp191 and His271. Residue His275 participates in substrate binding. His291 provides a ligand contact to Ni(2+).

The protein belongs to the glycerol-1-phosphate dehydrogenase family. As to quaternary structure, homodimer. Ni(2+) is required as a cofactor.

It localises to the cytoplasm. The enzyme catalyses sn-glycerol 1-phosphate + NAD(+) = dihydroxyacetone phosphate + NADH + H(+). The catalysed reaction is sn-glycerol 1-phosphate + NADP(+) = dihydroxyacetone phosphate + NADPH + H(+). In terms of biological role, catalyzes the NAD(P)H-dependent reduction of dihydroxyacetonephosphate (DHAP or glycerone phosphate) to glycerol 1-phosphate (G1P). The G1P thus generated is probably used for the synthesis of phosphoglycerolipids in Gram-positive bacterial species. The chain is Glycerol-1-phosphate dehydrogenase [NAD(P)+] from Geobacillus thermodenitrificans (strain NG80-2).